The primary structure comprises 280 residues: Foldase protein PrsA 4 (280 aa).

Positions 1-21 (MKRKKLVIGSILMGMTLSLSA) are cleaved as a signal peptide. A lipid anchor (N-palmitoyl cysteine) is attached at cysteine 22. Cysteine 22 carries S-diacylglycerol cysteine lipidation. Residues 132-222 (KPKLQVSHIL…FGYHIIKLTD (91 aa)) form the PpiC domain.

The protein belongs to the PrsA family.

The protein localises to the cell membrane. The catalysed reaction is [protein]-peptidylproline (omega=180) = [protein]-peptidylproline (omega=0). In terms of biological role, plays a major role in protein secretion by helping the post-translocational extracellular folding of several secreted proteins. The protein is Foldase protein PrsA 4 (prsA4) of Bacillus cereus (strain ATCC 14579 / DSM 31 / CCUG 7414 / JCM 2152 / NBRC 15305 / NCIMB 9373 / NCTC 2599 / NRRL B-3711).